We begin with the raw amino-acid sequence, 499 residues long: tRNA (guanine(37)-N(1))-methyltransferase (499 aa).

The N-terminal 44 residues, 1-44 (MKIALPVFQKFNRLISSCKMSGVFPYNPPVNRQMRELDRSFFIT), are a transit peptide targeting the mitochondrion. Residues His-268, 307-308 (DL), 335-336 (DG), and Asn-399 each bind S-adenosyl-L-methionine.

This sequence belongs to the class I-like SAM-binding methyltransferase superfamily. TRM5/TYW2 family. Monomer.

Its subcellular location is the mitochondrion matrix. It localises to the nucleus. It is found in the cytoplasm. The enzyme catalyses guanosine(37) in tRNA + S-adenosyl-L-methionine = N(1)-methylguanosine(37) in tRNA + S-adenosyl-L-homocysteine + H(+). Specifically methylates the N1 position of guanosine-37 in various cytoplasmic and mitochondrial tRNAs. Methylation is not dependent on the nature of the nucleoside 5' of the target nucleoside. This is the first step in the biosynthesis of wybutosine (yW), a modified base adjacent to the anticodon of tRNAs and required for accurate decoding. Postspliced cytoplasmic tRNAs are imported into the nucleus, where this first step seems to take place, after which they are reexported to the cytoplasm, where the yW sythesis is completed by cytoplasmic enzymes. The chain is tRNA (guanine(37)-N(1))-methyltransferase from Saccharomyces cerevisiae (strain ATCC 204508 / S288c) (Baker's yeast).